Reading from the N-terminus, the 484-residue chain is Cholesterol 22-hydroxylase CYP90B27 (484 aa).

Residues 2-22 form a helical membrane-spanning segment; the sequence is ALELILVLSSLIVILIIFFSF. Cys429 contributes to the heme binding site.

This sequence belongs to the cytochrome P450 family. Expressed in roots.

It is found in the membrane. The catalysed reaction is cholesterol + reduced [NADPH--hemoprotein reductase] + O2 = (22R)-hydroxycholesterol + oxidized [NADPH--hemoprotein reductase] + H2O + H(+). It participates in steroid metabolism; cholesterol metabolism. In terms of biological role, involved in the biosynthesis of steroidal saponins and alkaloids natural products from cholesterol such as spirostane-type saponins and polyphyllins, compounds with pharmacological activity. Catalyzes the C-22 hydroxylation of cholesterol to form 22R-hydroxycholesterol. The protein is Cholesterol 22-hydroxylase CYP90B27 of Paris polyphylla (Daiswa polyphylla).